The primary structure comprises 337 residues: tRNA N6-adenosine threonylcarbamoyltransferase (337 aa).

Residues histidine 111 and histidine 115 each contribute to the Fe cation site. Substrate contacts are provided by residues 134-138 (LVSGG), aspartate 167, glycine 180, and asparagine 272. Aspartate 300 contributes to the Fe cation binding site.

This sequence belongs to the KAE1 / TsaD family. It depends on Fe(2+) as a cofactor.

It localises to the cytoplasm. The catalysed reaction is L-threonylcarbamoyladenylate + adenosine(37) in tRNA = N(6)-L-threonylcarbamoyladenosine(37) in tRNA + AMP + H(+). Required for the formation of a threonylcarbamoyl group on adenosine at position 37 (t(6)A37) in tRNAs that read codons beginning with adenine. Is involved in the transfer of the threonylcarbamoyl moiety of threonylcarbamoyl-AMP (TC-AMP) to the N6 group of A37, together with TsaE and TsaB. TsaD likely plays a direct catalytic role in this reaction. The chain is tRNA N6-adenosine threonylcarbamoyltransferase from Erwinia tasmaniensis (strain DSM 17950 / CFBP 7177 / CIP 109463 / NCPPB 4357 / Et1/99).